A 234-amino-acid polypeptide reads, in one-letter code: Cyclo(L-leucyl-L-leucyl) synthase (234 aa).

Ser33 (nucleophile) is an active-site residue. Substrate contacts are provided by residues Asn36, 179–183 (YIFAE), Tyr203, and 208–209 (SI).

This sequence belongs to the CDPS family.

The enzyme catalyses 2 L-leucyl-tRNA(Leu) = cyclo(L-leucyl-L-leucyl) + 2 tRNA(Leu) + 2 H(+). In terms of biological role, it uses activated amino acids in the form of aminoacyl-tRNAs (aa-tRNAs) as substrates to catalyze the ATP-independent formation of cyclodipeptides which are intermediates in diketopiperazine (DKP) biosynthetic pathways. Catalyzes the formation of cyclo(L-Leu-L-Leu) (cLL) from L-leucyl-tRNA(Leu). Can incorporate various nonpolar residues, such as L-phenylalanine, L-leucine and L-methionine, into cyclodipeptides. In Photorhabdus laumondii subsp. laumondii (strain DSM 15139 / CIP 105565 / TT01) (Photorhabdus luminescens subsp. laumondii), this protein is Cyclo(L-leucyl-L-leucyl) synthase.